The primary structure comprises 355 residues: UDP-N-acetylglucosamine--N-acetylmuramyl-(pentapeptide) pyrophosphoryl-undecaprenol N-acetylglucosamine transferase (355 aa).

UDP-N-acetyl-alpha-D-glucosamine contacts are provided by residues 15-17 (TGG), Asn-127, Arg-163, Ser-191, Ile-244, 263-268 (ALTVSE), and Gln-288.

The protein belongs to the glycosyltransferase 28 family. MurG subfamily.

The protein resides in the cell inner membrane. It catalyses the reaction di-trans,octa-cis-undecaprenyl diphospho-N-acetyl-alpha-D-muramoyl-L-alanyl-D-glutamyl-meso-2,6-diaminopimeloyl-D-alanyl-D-alanine + UDP-N-acetyl-alpha-D-glucosamine = di-trans,octa-cis-undecaprenyl diphospho-[N-acetyl-alpha-D-glucosaminyl-(1-&gt;4)]-N-acetyl-alpha-D-muramoyl-L-alanyl-D-glutamyl-meso-2,6-diaminopimeloyl-D-alanyl-D-alanine + UDP + H(+). It functions in the pathway cell wall biogenesis; peptidoglycan biosynthesis. In terms of biological role, cell wall formation. Catalyzes the transfer of a GlcNAc subunit on undecaprenyl-pyrophosphoryl-MurNAc-pentapeptide (lipid intermediate I) to form undecaprenyl-pyrophosphoryl-MurNAc-(pentapeptide)GlcNAc (lipid intermediate II). This chain is UDP-N-acetylglucosamine--N-acetylmuramyl-(pentapeptide) pyrophosphoryl-undecaprenol N-acetylglucosamine transferase, found in Salmonella paratyphi A (strain ATCC 9150 / SARB42).